Reading from the N-terminus, the 282-residue chain is Undecaprenyl-diphosphatase (282 aa).

The next 7 membrane-spanning stretches (helical) occupy residues 6 to 26 (LYFVKAFFLGIIEGLTEFIPV), 45 to 65 (SGKVFEVVIQLGAILAVMWIF), 85 to 105 (LFTRNLLLAFFPAAIIGAIFI), 112 to 132 (FYHPGVVAVTLVLGGLIMLWV), 200 to 220 (ATEFSFFLAMPTMLGAAVYDM), 230 to 250 (HDLGAIAVGFVAAFLSALLVV), and 262 to 282 (YRGFAWYRIALGVVVAAWLAF).

This sequence belongs to the UppP family.

The protein localises to the cell inner membrane. The enzyme catalyses di-trans,octa-cis-undecaprenyl diphosphate + H2O = di-trans,octa-cis-undecaprenyl phosphate + phosphate + H(+). Catalyzes the dephosphorylation of undecaprenyl diphosphate (UPP). Confers resistance to bacitracin. The protein is Undecaprenyl-diphosphatase of Bordetella avium (strain 197N).